Reading from the N-terminus, the 1029-residue chain is Carbamoyl phosphate synthase large chain (1029 aa).

The tract at residues 1 to 402 (MPKRTDLQTI…SLQKALRSTE (402 aa)) is carboxyphosphate synthetic domain. The ATP site is built by Arg129, Arg169, Gly175, Gly176, Glu208, Ile210, Glu215, Gly241, Val242, His243, Gln285, and Glu299. An ATP-grasp 1 domain is found at 133–328 (QAAMKKIGVE…IAKIAALLAV (196 aa)). 3 residues coordinate Mg(2+): Gln285, Glu299, and Asn301. Residues Gln285, Glu299, and Asn301 each contribute to the Mn(2+) site. The tract at residues 403–544 (SDIRGVYAEM…YHYSTYEWED (142 aa)) is oligomerization domain. Residues 545-929 (EVTGTDKPKV…AFYRAQLGAK (385 aa)) form a carbamoyl phosphate synthetic domain region. Residues 671 to 863 (NALCERLGLS…LAKSAARIAV (193 aa)) enclose the ATP-grasp 2 domain. ATP-binding residues include Arg707, Gln747, Leu749, Glu754, Gly779, Val780, His781, Ser782, Gln822, and Glu834. Residues Gln822, Glu834, and Asn836 each contribute to the Mg(2+) site. Residues Gln822, Glu834, and Asn836 each coordinate Mn(2+). Positions 930–1028 (SYLPLSGTAL…QDWQTQEAVA (99 aa)) constitute an MGS-like domain. Residues 930–1029 (SYLPLSGTAL…DWQTQEAVAG (100 aa)) are allosteric domain.

Belongs to the CarB family. Composed of two chains; the small (or glutamine) chain promotes the hydrolysis of glutamine to ammonia, which is used by the large (or ammonia) chain to synthesize carbamoyl phosphate. Tetramer of heterodimers (alpha,beta)4. Requires Mg(2+) as cofactor. It depends on Mn(2+) as a cofactor.

The catalysed reaction is hydrogencarbonate + L-glutamine + 2 ATP + H2O = carbamoyl phosphate + L-glutamate + 2 ADP + phosphate + 2 H(+). It carries out the reaction hydrogencarbonate + NH4(+) + 2 ATP = carbamoyl phosphate + 2 ADP + phosphate + 2 H(+). It participates in amino-acid biosynthesis; L-arginine biosynthesis; carbamoyl phosphate from bicarbonate: step 1/1. It functions in the pathway pyrimidine metabolism; UMP biosynthesis via de novo pathway; (S)-dihydroorotate from bicarbonate: step 1/3. Large subunit of the glutamine-dependent carbamoyl phosphate synthetase (CPSase). CPSase catalyzes the formation of carbamoyl phosphate from the ammonia moiety of glutamine, carbonate, and phosphate donated by ATP, constituting the first step of 2 biosynthetic pathways, one leading to arginine and/or urea and the other to pyrimidine nucleotides. The large subunit (synthetase) binds the substrates ammonia (free or transferred from glutamine from the small subunit), hydrogencarbonate and ATP and carries out an ATP-coupled ligase reaction, activating hydrogencarbonate by forming carboxy phosphate which reacts with ammonia to form carbamoyl phosphate. This chain is Carbamoyl phosphate synthase large chain, found in Deinococcus deserti (strain DSM 17065 / CIP 109153 / LMG 22923 / VCD115).